We begin with the raw amino-acid sequence, 540 residues long: Putative sel1-like repeat-containing protein R815 (540 aa).

Sel1-like repeat units lie at residues 129 to 164 (IDAQ…YKEN), 165 to 200 (LFGL…KHNY), 201 to 236 (PAVK…NQGY), 237 to 272 (PLAQ…NNGC), 273 to 308 (LYAT…SENY), and 309 to 344 (LLAI…NSTK).

The sequence is that of Putative sel1-like repeat-containing protein R815 from Acanthamoeba polyphaga (Amoeba).